A 1119-amino-acid chain; its full sequence is DISARM protein DrmA (1119 aa).

The disordered stretch occupies residues 73–95 (PESGMEEDVEQQRNSELEQEAEE). Residues 813 to 986 (ELSKYIDPYR…ATPYASRARD (174 aa)) form the Helicase C-terminal domain.

This sequence belongs to the helicase family.

It is found in the cytoplasm. Functionally, component of antiviral defense system DISARM (defense island system associated with restriction-modification), composed of DrmE, DrmA, DrmB, DrmC and DrmMII. DISARM is probably a multi-gene restriction module, this subunit is probably a helicase. Expression of DISARM in B.subtilis (strain BEST7003) confers resistance to phages Nf, phi29, phi105, phi3T, SPO1, SPR and SPP1. Protection is over 10(7)-fold against phi3T, 10(4)-10(5)-fold against Nf, phi29, phi105 and SPR, 100-fold against SPO1 and 10-fold against SPP1. DISARM does not interfere with phage adsorption, but instead interferes with (phi3T) DNA replication early in its cycle, preventing replication, circularization and lysogeny and probably causes phage DNA degradation (DNA is degraded in SPP1-infected cells). The protein is DISARM protein DrmA of Bacillus paralicheniformis (strain ATCC 9945a / NCIMB 11709 / CD-2).